Consider the following 426-residue polypeptide: Histidine--tRNA ligase (426 aa).

This sequence belongs to the class-II aminoacyl-tRNA synthetase family. As to quaternary structure, homodimer.

The protein localises to the cytoplasm. The catalysed reaction is tRNA(His) + L-histidine + ATP = L-histidyl-tRNA(His) + AMP + diphosphate + H(+). The protein is Histidine--tRNA ligase of Streptococcus thermophilus (strain CNRZ 1066).